We begin with the raw amino-acid sequence, 299 residues long: Protein NSG2 (299 aa).

Topologically, residues 1–108 are cytoplasmic; it reads MANRGEPDPK…PSRTRQTRQN (108 aa). At S90 the chain carries Phosphoserine. Residues 109-129 traverse the membrane as a helical segment; that stretch reads ILHYLQAVLILSLSGFAYHEL. Topologically, residues 130–161 are lumenal; the sequence is SRNLHDNHLLHPDFASRPLLLGVKLCNWLSNG. The helical transmembrane segment at 162 to 182 threads the bilayer; that stretch reads VLPNWLGYGVEGLLFGSVVPI. The Cytoplasmic portion of the chain corresponds to 183 to 237; sequence LDNIFQTEVVKSSVHHDSLTSVIRSINAMLGVTFGIRKIQWNSSLQAAGAWGLLN. Residues 238 to 258 form a helical membrane-spanning segment; that stretch reads IILWLFFDGSISMLMSCICIG. Residues 259–268 are Lumenal-facing; sequence VGCCISCYKD. Residues 269-289 form a helical membrane-spanning segment; the sequence is IIDGSQFLYFMDFYFLGSLMF. The Cytoplasmic segment spans residues 290-299; the sequence is GKLGRYLYSH.

It belongs to the INSIG family.

The protein localises to the endoplasmic reticulum membrane. Functionally, stabilizes the HMG-CoA reductase HMG2 by preventing its HRD1-dependent degradation. Binds directly to the sterol-sensing domain (SSD)-containing transmembrane region of HMG2, promoting its folding to protect it from degradation. The chain is Protein NSG2 (NSG2) from Saccharomyces cerevisiae (strain ATCC 204508 / S288c) (Baker's yeast).